Consider the following 170-residue polypeptide: Lipoprotein signal peptidase (170 aa).

3 consecutive transmembrane segments (helical) span residues 12 to 32 (WYWVVVLVFVADQLSKQWVLS), 67 to 87 (WQRWLFTFVAVGFSVVLSVWL), and 94 to 116 (MWRLNLAYTLVIGGALGNLIDRL). Active-site residues include Asp-123 and Asp-141. The chain crosses the membrane as a helical span at residues 133 to 153 (HFPAFNIADSAICVGAALIIL).

This sequence belongs to the peptidase A8 family.

The protein localises to the cell inner membrane. The catalysed reaction is Release of signal peptides from bacterial membrane prolipoproteins. Hydrolyzes -Xaa-Yaa-Zaa-|-(S,diacylglyceryl)Cys-, in which Xaa is hydrophobic (preferably Leu), and Yaa (Ala or Ser) and Zaa (Gly or Ala) have small, neutral side chains.. The protein operates within protein modification; lipoprotein biosynthesis (signal peptide cleavage). Its function is as follows. This protein specifically catalyzes the removal of signal peptides from prolipoproteins. The protein is Lipoprotein signal peptidase of Shewanella halifaxensis (strain HAW-EB4).